A 92-amino-acid chain; its full sequence is Actobindin-A (92 aa).

Disordered stretches follow at residues 1–33 and 54–92; these read MSAP…IGSD and LKHA…AADS. 2 WH2 domains span residues 3–20 and 40–57; these read APNP…LKHT and DHAS…LKHA. Composition is skewed to basic and acidic residues over residues 13–33 and 54–64; these read KGAD…IGSD and LKHAETDDKSA. The span at 68 to 79 shows a compositional bias: polar residues; sequence NENTTIKPNNHS.

In terms of assembly, monomer.

Functionally, is able to bind two actin monomers at high concentrations of G-actin. Inhibits actin polymerization by sequestering G-actin and stabilizing actin dimers. The chain is Actobindin-A (abnA) from Dictyostelium discoideum (Social amoeba).